Consider the following 273-residue polypeptide: 4-hydroxy-tetrahydrodipicolinate reductase (273 aa).

NAD(+) contacts are provided by residues 8–13, Glu-34, 102–104, and 128–131; these read GACGRM, GTT, and APNM. The active-site Proton donor/acceptor is the His-160. His-161 is a (S)-2,3,4,5-tetrahydrodipicolinate binding site. Lys-164 serves as the catalytic Proton donor. A (S)-2,3,4,5-tetrahydrodipicolinate-binding site is contributed by 170–171; the sequence is GT.

This sequence belongs to the DapB family.

The protein localises to the cytoplasm. It catalyses the reaction (S)-2,3,4,5-tetrahydrodipicolinate + NAD(+) + H2O = (2S,4S)-4-hydroxy-2,3,4,5-tetrahydrodipicolinate + NADH + H(+). It carries out the reaction (S)-2,3,4,5-tetrahydrodipicolinate + NADP(+) + H2O = (2S,4S)-4-hydroxy-2,3,4,5-tetrahydrodipicolinate + NADPH + H(+). The protein operates within amino-acid biosynthesis; L-lysine biosynthesis via DAP pathway; (S)-tetrahydrodipicolinate from L-aspartate: step 4/4. In terms of biological role, catalyzes the conversion of 4-hydroxy-tetrahydrodipicolinate (HTPA) to tetrahydrodipicolinate. This Methanothermobacter thermautotrophicus (strain ATCC 29096 / DSM 1053 / JCM 10044 / NBRC 100330 / Delta H) (Methanobacterium thermoautotrophicum) protein is 4-hydroxy-tetrahydrodipicolinate reductase.